Here is a 917-residue protein sequence, read N- to C-terminus: Interleukin-6 receptor subunit beta (917 aa).

An N-terminal signal peptide occupies residues 1–22; sequence MSAPRIWLAQALLFFLTTESIG. At 23–617 the chain is on the extracellular side; the sequence is QLLEPCGYIY…TPKFAQGEIE (595 aa). Positions 26-120 constitute an Ig-like C2-type domain; the sequence is EPCGYIYPEF…IEQNVYGVTM (95 aa). Intrachain disulfides connect Cys-28–Cys-54 and Cys-48–Cys-103. Residues Asn-43, Asn-61, Asn-83, and Asn-131 are each glycosylated (N-linked (GlcNAc...) asparagine). 5 Fibronectin type-III domains span residues 128–221, 222–322, 327–417, 422–515, and 517–611; these read KPTN…VKPT, PPYN…TYED, PPSF…IPSP, AYSV…LKQA, and PARG…TPKF. A disulfide bond links Cys-134 and Cys-144. An N-linked (GlcNAc...) asparagine glycan is attached at Asn-157. Cys-172 and Cys-180 are oxidised to a cystine. N-linked (GlcNAc...) asparagine glycosylation is present at Asn-225. Positions 308 to 312 match the WSXWS motif motif; that stretch reads WSDWS. An N-linked (GlcNAc...) asparagine glycan is attached at Asn-388. Residues Cys-456 and Cys-464 are joined by a disulfide bond. Residues Asn-476 and Asn-551 are each glycosylated (N-linked (GlcNAc...) asparagine). Residues 618–639 traverse the membrane as a helical segment; the sequence is AIVVPVCLAFLLTTLLGVLFCF. Residues 640 to 917 are Cytoplasmic-facing; the sequence is NKRDLIKKHI…TVRQGGYMPQ (278 aa). A Box 1 motif motif is present at residues 649–657; that stretch reads IWPNVPDPS. Disordered regions lie at residues 658–678 and 719–754; these read KSHI…NSKD and TEGH…TAST. Phosphoserine is present on residues Ser-659 and Ser-665. A compositionally biased stretch (low complexity) spans 729-753; it reads SSCMSSSRPSISSNEENESAQSTAS. Ser-780, Ser-787, Ser-827, and Ser-837 each carry phosphoserine. Residues 898 to 917 are disordered; that stretch reads EEIPKSYLPQTVRQGGYMPQ.

It belongs to the type I cytokine receptor family. Type 2 subfamily. Component of a hexamer of two molecules each of IL6, IL6R and IL6ST; associates with the complex IL6:IL6R but does not interact with IL6. Forms heterodimers composed of LIFR and IL6ST (type I OSM receptor) which are activated by LIF and OSM. Also forms heterodimers composed of OSMR and IL6ST (type II receptor) which are activated by OSM but not by LIF. Interacts with HCK. Interacts with INPP5D/SHIP1. Interacts with SRC and YES. Interacts with ARMH4; this interaction prevents IL6ST protein homodimerization and bridges ARMH4 with IL6R and STAT3 and therefore inhibits phosphorylation of STAT3 at 'Tyr-705'. In terms of processing, phosphorylation of Ser-780 down-regulates cell surface expression. Heavily N-glycosylated. Glycosylation is required for protein stability and localization in plasma membrane but not for ligand binding. In terms of tissue distribution, expression not restricted to IL6-responsive cells. Found in tissues such as brain, heart, thymus, spleen, kidney, lung and liver. Found in all the cell lines tested except BaF-B03. Expressed paraventricular nucleus of the hypothalamus.

It localises to the cell membrane. Its function is as follows. Signal-transducing molecule. The receptor systems for IL6, LIF, OSM, CNTF, IL11, CTF1 and BSF3 can utilize IL6ST for initiating signal transmission. Binding of IL6 to IL6R induces IL6ST homodimerization and formation of a high-affinity receptor complex, which activates the intracellular JAK-MAPK and JAK-STAT3 signaling pathways. That causes phosphorylation of IL6ST tyrosine residues which in turn activates STAT3. In parallel, the IL6 signaling pathway induces the expression of two cytokine receptor signaling inhibitors, SOCS1 and SOCS3, which inhibit JAK and terminate the activity of the IL6 signaling pathway as a negative feedback loop. Also activates the yes-associated protein 1 (YAP) and NOTCH pathways to control inflammation-induced epithelial regeneration, independently of STAT3. Mediates signals which regulate immune response, hematopoiesis, pain control and bone metabolism. Has a role in embryonic development. Essential for survival of motor and sensory neurons and for differentiation of astrocytes. Required for expression of TRPA1 in nociceptive neurons. Required for the maintenance of PTH1R expression in the osteoblast lineage and for the stimulation of PTH-induced osteoblast differentiation. Required for normal trabecular bone mass and cortical bone composition. The sequence is that of Interleukin-6 receptor subunit beta from Mus musculus (Mouse).